We begin with the raw amino-acid sequence, 285 residues long: Shikimate dehydrogenase (NADP(+)) (285 aa).

Residues 19–21 (SLS) and Thr-66 contribute to the shikimate site. The active-site Proton acceptor is the Lys-70. The shikimate site is built by Asn-91 and Asp-107. NADP(+) contacts are provided by residues 129 to 133 (GSGGA) and Leu-228. Tyr-230 contributes to the shikimate binding site. Gly-251 lines the NADP(+) pocket.

Belongs to the shikimate dehydrogenase family. In terms of assembly, homodimer.

It carries out the reaction shikimate + NADP(+) = 3-dehydroshikimate + NADPH + H(+). The protein operates within metabolic intermediate biosynthesis; chorismate biosynthesis; chorismate from D-erythrose 4-phosphate and phosphoenolpyruvate: step 4/7. In terms of biological role, involved in the biosynthesis of the chorismate, which leads to the biosynthesis of aromatic amino acids. Catalyzes the reversible NADPH linked reduction of 3-dehydroshikimate (DHSA) to yield shikimate (SA). The chain is Shikimate dehydrogenase (NADP(+)) from Prochlorococcus marinus subsp. pastoris (strain CCMP1986 / NIES-2087 / MED4).